We begin with the raw amino-acid sequence, 116 residues long: Fluoride-specific ion channel FluC 1 (116 aa).

4 consecutive transmembrane segments (helical) span residues 2–22 (LVLV…RYGI), 33–53 (PLPI…GWIL), 63–83 (IFLG…INEL), and 96–116 (WEYF…GTLI). Residues G71 and T74 each coordinate Na(+).

The protein belongs to the fluoride channel Fluc/FEX (TC 1.A.43) family.

It localises to the cell membrane. It carries out the reaction fluoride(in) = fluoride(out). Its activity is regulated as follows. Na(+) is not transported, but it plays an essential structural role and its presence is essential for fluoride channel function. Functionally, fluoride-specific ion channel. Important for reducing fluoride concentration in the cell, thus reducing its toxicity. This is Fluoride-specific ion channel FluC 1 from Lactiplantibacillus plantarum (strain ATCC BAA-793 / NCIMB 8826 / WCFS1) (Lactobacillus plantarum).